Here is a 481-residue protein sequence, read N- to C-terminus: Protein nucleotidyltransferase YdiU (481 aa).

ATP contacts are provided by G87, G89, R90, K110, D122, G123, R173, and R180. D249 functions as the Proton acceptor in the catalytic mechanism. The Mg(2+) site is built by N250 and D259. ATP is bound at residue D259.

It belongs to the SELO family. Mg(2+) is required as a cofactor. It depends on Mn(2+) as a cofactor.

The catalysed reaction is L-seryl-[protein] + ATP = 3-O-(5'-adenylyl)-L-seryl-[protein] + diphosphate. It carries out the reaction L-threonyl-[protein] + ATP = 3-O-(5'-adenylyl)-L-threonyl-[protein] + diphosphate. It catalyses the reaction L-tyrosyl-[protein] + ATP = O-(5'-adenylyl)-L-tyrosyl-[protein] + diphosphate. The enzyme catalyses L-histidyl-[protein] + UTP = N(tele)-(5'-uridylyl)-L-histidyl-[protein] + diphosphate. The catalysed reaction is L-seryl-[protein] + UTP = O-(5'-uridylyl)-L-seryl-[protein] + diphosphate. It carries out the reaction L-tyrosyl-[protein] + UTP = O-(5'-uridylyl)-L-tyrosyl-[protein] + diphosphate. In terms of biological role, nucleotidyltransferase involved in the post-translational modification of proteins. It can catalyze the addition of adenosine monophosphate (AMP) or uridine monophosphate (UMP) to a protein, resulting in modifications known as AMPylation and UMPylation. This Mycobacterium sp. (strain KMS) protein is Protein nucleotidyltransferase YdiU.